Here is a 100-residue protein sequence, read N- to C-terminus: Integration host factor subunit alpha (100 aa).

It belongs to the bacterial histone-like protein family. Heterodimer of an alpha and a beta chain.

Functionally, this protein is one of the two subunits of integration host factor, a specific DNA-binding protein that functions in genetic recombination as well as in transcriptional and translational control. In Alcanivorax borkumensis (strain ATCC 700651 / DSM 11573 / NCIMB 13689 / SK2), this protein is Integration host factor subunit alpha.